Here is a 1615-residue protein sequence, read N- to C-terminus: DNA-directed RNA polymerase I subunit rpa1 (1615 aa).

Positions 65, 68, 75, and 78 each coordinate Zn(2+). Residues 155-181 (GKSNEEGEEVMESDESDSDKMDTDENK) form a disordered region. Acidic residues predominate over residues 160-171 (EGEEVMESDESD). A compositionally biased stretch (basic and acidic residues) spans 172 to 181 (SDKMDTDENK). The Mg(2+) site is built by Asp593, Asp595, and Asp597. Positions 955-967 (PQDYFFHCMAGRE) are bridging helix. A compositionally biased stretch (acidic residues) spans 1305–1316 (DSLTINDDDAPA). Residues 1305–1411 (DSLTINDDDA…NSRSSNSFSD (107 aa)) are disordered. The segment covering 1317–1336 (NDDTTNNDENTSQQQPSSQN) has biased composition (low complexity). Residues 1366–1399 (EDGEEEAEEKDSDEGESEAEESDDKSDVDSDSDE) show a composition bias toward acidic residues. A compositionally biased stretch (low complexity) spans 1400 to 1411 (ISNSRSSNSFSD).

It belongs to the RNA polymerase beta' chain family. Component of the RNA polymerase I (Pol I) complex consisting of at least 13 subunits.

Its subcellular location is the nucleus. The catalysed reaction is RNA(n) + a ribonucleoside 5'-triphosphate = RNA(n+1) + diphosphate. Functionally, DNA-dependent RNA polymerase catalyzes the transcription of DNA into RNA using the four ribonucleoside triphosphates as substrates. Largest and catalytic core component of RNA polymerase I which synthesizes ribosomal RNA precursors. Forms the polymerase active center together with the second largest subunit. A single stranded DNA template strand of the promoter is positioned within the central active site cleft of Pol I. A bridging helix emanates from RPA1 and crosses the cleft near the catalytic site and is thought to promote translocation of Pol I by acting as a ratchet that moves the RNA-DNA hybrid through the active site by switching from straight to bent conformations at each step of nucleotide addition. This Dictyostelium discoideum (Social amoeba) protein is DNA-directed RNA polymerase I subunit rpa1 (polr1a).